The following is a 276-amino-acid chain: Shikimate dehydrogenase (NADP(+)) (276 aa).

Shikimate-binding positions include 18-20 and threonine 65; that span reads SRS. Lysine 69 serves as the catalytic Proton acceptor. Asparagine 90 and aspartate 106 together coordinate shikimate. NADP(+)-binding positions include 132–136 and isoleucine 221; that span reads GAGGA. Residue tyrosine 223 coordinates shikimate. Glycine 244 serves as a coordination point for NADP(+).

The protein belongs to the shikimate dehydrogenase family. Homodimer.

The catalysed reaction is shikimate + NADP(+) = 3-dehydroshikimate + NADPH + H(+). The protein operates within metabolic intermediate biosynthesis; chorismate biosynthesis; chorismate from D-erythrose 4-phosphate and phosphoenolpyruvate: step 4/7. Involved in the biosynthesis of the chorismate, which leads to the biosynthesis of aromatic amino acids. Catalyzes the reversible NADPH linked reduction of 3-dehydroshikimate (DHSA) to yield shikimate (SA). The polypeptide is Shikimate dehydrogenase (NADP(+)) (Paramagnetospirillum magneticum (strain ATCC 700264 / AMB-1) (Magnetospirillum magneticum)).